Consider the following 286-residue polypeptide: Pantothenate synthetase (286 aa).

31 to 38 (MGALHEGH) is a binding site for ATP. Residue H38 is the Proton donor of the active site. Q65 contributes to the (R)-pantoate binding site. Q65 serves as a coordination point for beta-alanine. 153–156 (GEKD) serves as a coordination point for ATP. A (R)-pantoate-binding site is contributed by Q159. 190–193 (LSSR) serves as a coordination point for ATP.

This sequence belongs to the pantothenate synthetase family. Homodimer.

The protein localises to the cytoplasm. It carries out the reaction (R)-pantoate + beta-alanine + ATP = (R)-pantothenate + AMP + diphosphate + H(+). Its pathway is cofactor biosynthesis; (R)-pantothenate biosynthesis; (R)-pantothenate from (R)-pantoate and beta-alanine: step 1/1. Functionally, catalyzes the condensation of pantoate with beta-alanine in an ATP-dependent reaction via a pantoyl-adenylate intermediate. The sequence is that of Pantothenate synthetase from Corynebacterium diphtheriae (strain ATCC 700971 / NCTC 13129 / Biotype gravis).